The following is a 618-amino-acid chain: UvrABC system protein C (618 aa).

The region spanning 19–97 (SEPGIYRMLD…IKALRPKYNV (79 aa)) is the GIY-YIG domain. The UVR domain maps to 208–243 (QIILDALAERMKQAVNQLNFEEAAVLRDQIKNLRLI).

This sequence belongs to the UvrC family. As to quaternary structure, interacts with UvrB in an incision complex.

The protein resides in the cytoplasm. Its function is as follows. The UvrABC repair system catalyzes the recognition and processing of DNA lesions. UvrC both incises the 5' and 3' sides of the lesion. The N-terminal half is responsible for the 3' incision and the C-terminal half is responsible for the 5' incision. The polypeptide is UvrABC system protein C (Legionella pneumophila (strain Paris)).